A 104-amino-acid polypeptide reads, in one-letter code: Co-chaperonin GroES 2 (104 aa).

The protein belongs to the GroES chaperonin family. Heptamer of 7 subunits arranged in a ring. Interacts with the chaperonin GroEL.

It is found in the cytoplasm. Together with the chaperonin GroEL, plays an essential role in assisting protein folding. The GroEL-GroES system forms a nano-cage that allows encapsulation of the non-native substrate proteins and provides a physical environment optimized to promote and accelerate protein folding. GroES binds to the apical surface of the GroEL ring, thereby capping the opening of the GroEL channel. In Mesorhizobium japonicum (strain LMG 29417 / CECT 9101 / MAFF 303099) (Mesorhizobium loti (strain MAFF 303099)), this protein is Co-chaperonin GroES 2.